Here is an 841-residue protein sequence, read N- to C-terminus: Protein translocase subunit SecA (841 aa).

Residues Gln85, 103–107 (GEGKT), and Asp492 each bind ATP. The disordered stretch occupies residues 786 to 812 (REEVVQGQTTAHQPQDGDEAKQAKKAP). Residues Cys825, Cys827, Cys836, and Cys837 each coordinate Zn(2+).

This sequence belongs to the SecA family. Monomer and homodimer. Part of the essential Sec protein translocation apparatus which comprises SecA, SecYEG and auxiliary proteins SecDF. Other proteins may also be involved. Zn(2+) is required as a cofactor.

Its subcellular location is the cell membrane. The protein localises to the cytoplasm. The catalysed reaction is ATP + H2O + cellular proteinSide 1 = ADP + phosphate + cellular proteinSide 2.. Part of the Sec protein translocase complex. Interacts with the SecYEG preprotein conducting channel. Has a central role in coupling the hydrolysis of ATP to the transfer of proteins into and across the cell membrane, serving as an ATP-driven molecular motor driving the stepwise translocation of polypeptide chains across the membrane. The chain is Protein translocase subunit SecA from Bacillus velezensis (strain DSM 23117 / BGSC 10A6 / LMG 26770 / FZB42) (Bacillus amyloliquefaciens subsp. plantarum).